Consider the following 267-residue polypeptide: Undecaprenyl-diphosphatase (267 aa).

A run of 8 helical transmembrane segments spans residues 1–21 (MTLFHLILVAAIQGLTEFLPV), 40–60 (GLAIDVAVHVGSLLAVILYFW), 83–103 (AFLALCLIIATIPVMIAGLII), 111–131 (MMRSVAVIGWTMLGFGLVLYW), 144–164 (GWTLKDAFLMGLAQILSLIPG), 189–209 (AMLMSIPTIIASGAVLGADVI), 219–239 (DGALAAALAFVSALLALALMM), and 245–265 (VSFTPYVVYRVILGLILLVYA).

It belongs to the UppP family.

It is found in the cell inner membrane. It carries out the reaction di-trans,octa-cis-undecaprenyl diphosphate + H2O = di-trans,octa-cis-undecaprenyl phosphate + phosphate + H(+). Catalyzes the dephosphorylation of undecaprenyl diphosphate (UPP). Confers resistance to bacitracin. The protein is Undecaprenyl-diphosphatase of Roseobacter denitrificans (strain ATCC 33942 / OCh 114) (Erythrobacter sp. (strain OCh 114)).